An 85-amino-acid polypeptide reads, in one-letter code: Small ribosomal subunit protein bS16 (85 aa).

It belongs to the bacterial ribosomal protein bS16 family.

The protein is Small ribosomal subunit protein bS16 of Clostridium kluyveri (strain NBRC 12016).